Reading from the N-terminus, the 318-residue chain is Pantothenate kinase (318 aa).

ATP is bound at residue 96–103 (GSVAVGKS).

The protein belongs to the prokaryotic pantothenate kinase family.

The protein resides in the cytoplasm. It carries out the reaction (R)-pantothenate + ATP = (R)-4'-phosphopantothenate + ADP + H(+). It participates in cofactor biosynthesis; coenzyme A biosynthesis; CoA from (R)-pantothenate: step 1/5. The protein is Pantothenate kinase of Coxiella burnetii (strain CbuK_Q154) (Coxiella burnetii (strain Q154)).